A 344-amino-acid chain; its full sequence is N-acetyl-gamma-glutamyl-phosphate reductase (344 aa).

C150 is an active-site residue.

The protein belongs to the NAGSA dehydrogenase family. Type 1 subfamily.

Its subcellular location is the cytoplasm. The catalysed reaction is N-acetyl-L-glutamate 5-semialdehyde + phosphate + NADP(+) = N-acetyl-L-glutamyl 5-phosphate + NADPH + H(+). It functions in the pathway amino-acid biosynthesis; L-arginine biosynthesis; N(2)-acetyl-L-ornithine from L-glutamate: step 3/4. Catalyzes the NADPH-dependent reduction of N-acetyl-5-glutamyl phosphate to yield N-acetyl-L-glutamate 5-semialdehyde. This chain is N-acetyl-gamma-glutamyl-phosphate reductase, found in Pseudomonas aeruginosa (strain UCBPP-PA14).